Reading from the N-terminus, the 309-residue chain is Tagatose-6-phosphate kinase (309 aa).

It belongs to the carbohydrate kinase PfkB family. LacC subfamily.

The enzyme catalyses D-tagatofuranose 6-phosphate + ATP = D-tagatofuranose 1,6-bisphosphate + ADP + H(+). It functions in the pathway carbohydrate metabolism; D-tagatose 6-phosphate degradation; D-glyceraldehyde 3-phosphate and glycerone phosphate from D-tagatose 6-phosphate: step 1/2. This Streptococcus sanguinis (strain SK36) protein is Tagatose-6-phosphate kinase.